A 320-amino-acid chain; its full sequence is Protein phosphatase PTC7 homolog fig (320 aa).

Residues 49 to 315 (PYLVTAVQGR…DDITLILASV (267 aa)) enclose the PPM-type phosphatase domain. Residues Asp93, Gly94, and Asp238 each coordinate Mn(2+).

This sequence belongs to the PP2C family. The cofactor is Mg(2+). It depends on Mn(2+) as a cofactor.

The catalysed reaction is O-phospho-L-seryl-[protein] + H2O = L-seryl-[protein] + phosphate. It carries out the reaction O-phospho-L-threonyl-[protein] + H2O = L-threonyl-[protein] + phosphate. In Drosophila yakuba (Fruit fly), this protein is Protein phosphatase PTC7 homolog fig.